The primary structure comprises 79 residues: Small ribosomal subunit protein bS18B (79 aa).

Belongs to the bacterial ribosomal protein bS18 family. In terms of assembly, part of the 30S ribosomal subunit. Forms a tight heterodimer with protein bS6.

Its function is as follows. Binds as a heterodimer with protein bS6 to the central domain of the 16S rRNA, where it helps stabilize the platform of the 30S subunit. This Saccharopolyspora erythraea (strain ATCC 11635 / DSM 40517 / JCM 4748 / NBRC 13426 / NCIMB 8594 / NRRL 2338) protein is Small ribosomal subunit protein bS18B.